A 70-amino-acid chain; its full sequence is Cold shock-like protein CspJ (70 aa).

A CSD domain is found at 7-67 (GLVKWFNPEK…GPKGPSAVNV (61 aa)).

Its subcellular location is the cytoplasm. The sequence is that of Cold shock-like protein CspJ (cspJ) from Salmonella typhimurium (strain SL1344).